A 554-amino-acid chain; its full sequence is Phenylalanine--tRNA ligase beta subunit (554 aa).

The region spanning 276–351 (LTPKSRIISV…INYGYEKFDG (76 aa)) is the B5 domain. The Mg(2+) site is built by Asp-329, Asp-335, Glu-338, and Glu-339.

The protein belongs to the phenylalanyl-tRNA synthetase beta subunit family. Type 2 subfamily. In terms of assembly, tetramer of two alpha and two beta subunits. The cofactor is Mg(2+).

The protein localises to the cytoplasm. It catalyses the reaction tRNA(Phe) + L-phenylalanine + ATP = L-phenylalanyl-tRNA(Phe) + AMP + diphosphate + H(+). The chain is Phenylalanine--tRNA ligase beta subunit from Methanococcus maripaludis (strain DSM 14266 / JCM 13030 / NBRC 101832 / S2 / LL).